Here is a 461-residue protein sequence, read N- to C-terminus: Kremen protein 2 (461 aa).

The first 24 residues, 1-24 (MGTPHLQGFLLLFPLLLRLHGASA), serve as a signal peptide directing secretion. Over 25–363 (GSLHSPGLSE…SPKPGAAQAS (339 aa)) the chain is Extracellular. In terms of domain architecture, Kringle spans 34–118 (ECFQVNGADY…YWRYCDIPTC (85 aa)). Cystine bridges form between cysteine 35–cysteine 118, cysteine 59–cysteine 99, and cysteine 88–cysteine 113. Residue asparagine 48 is glycosylated (N-linked (GlcNAc...) asparagine). The region spanning 120–214 (MPGYLGCFVD…DGRLGIYEVS (95 aa)) is the WSC domain. An intrachain disulfide couples cysteine 218 to cysteine 244. A CUB domain is found at 218–325 (CQGNWSAPQG…QGFALTYRGL (108 aa)). N-linked (GlcNAc...) asparagine glycosylation is found at asparagine 221, asparagine 243, and asparagine 350. A disordered region spans residues 329–357 (VEGRASPEDSTESLAGDPDGANASCSPKP). Residues 364 to 386 (IGARVFSTVTAFSVLLLLLLSLL) traverse the membrane as a helical segment. Residues 387 to 461 (RLLRRRSCLL…SSLRSLVSAL (75 aa)) are Cytoplasmic-facing. Residues 429–452 (CPPGDSQAEGPAAGYRPLSASSQS) are disordered.

In terms of assembly, interacts with ERLEC1. Forms a ternary complex with DKK1 and LRP6.

It is found in the membrane. In terms of biological role, receptor for Dickkopf proteins. Cooperates with DKK1/2 to inhibit Wnt/beta-catenin signaling by promoting the endocytosis of Wnt receptors LRP5 and LRP6. Plays a role in limb development; attenuates Wnt signaling in the developing limb to allow normal limb patterning and can also negatively regulate bone formation. This is Kremen protein 2 (Kremen2) from Mus musculus (Mouse).